The following is a 305-amino-acid chain: UDP-3-O-acyl-N-acetylglucosamine deacetylase (305 aa).

Zn(2+) is bound by residues H79, H238, and D242. H265 functions as the Proton donor in the catalytic mechanism.

It belongs to the LpxC family. Requires Zn(2+) as cofactor.

The enzyme catalyses a UDP-3-O-[(3R)-3-hydroxyacyl]-N-acetyl-alpha-D-glucosamine + H2O = a UDP-3-O-[(3R)-3-hydroxyacyl]-alpha-D-glucosamine + acetate. The protein operates within glycolipid biosynthesis; lipid IV(A) biosynthesis; lipid IV(A) from (3R)-3-hydroxytetradecanoyl-[acyl-carrier-protein] and UDP-N-acetyl-alpha-D-glucosamine: step 2/6. Functionally, catalyzes the hydrolysis of UDP-3-O-myristoyl-N-acetylglucosamine to form UDP-3-O-myristoylglucosamine and acetate, the committed step in lipid A biosynthesis. The protein is UDP-3-O-acyl-N-acetylglucosamine deacetylase of Vibrio campbellii (strain ATCC BAA-1116).